A 673-amino-acid polypeptide reads, in one-letter code: DNA mismatch repair protein MutL (673 aa).

Belongs to the DNA mismatch repair MutL/HexB family.

In terms of biological role, this protein is involved in the repair of mismatches in DNA. It is required for dam-dependent methyl-directed DNA mismatch repair. May act as a 'molecular matchmaker', a protein that promotes the formation of a stable complex between two or more DNA-binding proteins in an ATP-dependent manner without itself being part of a final effector complex. The sequence is that of DNA mismatch repair protein MutL from Ehrlichia chaffeensis (strain ATCC CRL-10679 / Arkansas).